Here is a 906-residue protein sequence, read N- to C-terminus: Protein translocase subunit SecA (906 aa).

Residues glutamine 89, 107 to 111 (GEGKT), and aspartate 502 contribute to the ATP site. 4 residues coordinate Zn(2+): cysteine 890, cysteine 892, cysteine 901, and histidine 902.

Belongs to the SecA family. In terms of assembly, monomer and homodimer. Part of the essential Sec protein translocation apparatus which comprises SecA, SecYEG and auxiliary proteins SecDF-YajC and YidC. The cofactor is Zn(2+).

The protein localises to the cell inner membrane. Its subcellular location is the cytoplasm. It carries out the reaction ATP + H2O + cellular proteinSide 1 = ADP + phosphate + cellular proteinSide 2.. Its function is as follows. Part of the Sec protein translocase complex. Interacts with the SecYEG preprotein conducting channel. Has a central role in coupling the hydrolysis of ATP to the transfer of proteins into and across the cell membrane, serving both as a receptor for the preprotein-SecB complex and as an ATP-driven molecular motor driving the stepwise translocation of polypeptide chains across the membrane. The sequence is that of Protein translocase subunit SecA from Bartonella quintana (strain Toulouse) (Rochalimaea quintana).